Here is a 471-residue protein sequence, read N- to C-terminus: ATP synthase subunit beta (471 aa).

Residue 152 to 159 (GGAGVGKT) coordinates ATP.

Belongs to the ATPase alpha/beta chains family. F-type ATPases have 2 components, CF(1) - the catalytic core - and CF(0) - the membrane proton channel. CF(1) has five subunits: alpha(3), beta(3), gamma(1), delta(1), epsilon(1). CF(0) has three main subunits: a(1), b(2) and c(9-12). The alpha and beta chains form an alternating ring which encloses part of the gamma chain. CF(1) is attached to CF(0) by a central stalk formed by the gamma and epsilon chains, while a peripheral stalk is formed by the delta and b chains.

It localises to the cell membrane. The enzyme catalyses ATP + H2O + 4 H(+)(in) = ADP + phosphate + 5 H(+)(out). Produces ATP from ADP in the presence of a proton gradient across the membrane. The catalytic sites are hosted primarily by the beta subunits. This chain is ATP synthase subunit beta, found in Herpetosiphon aurantiacus (strain ATCC 23779 / DSM 785 / 114-95).